A 316-amino-acid chain; its full sequence is Probable cell division protein WhiA (316 aa).

A DNA-binding region (H-T-H motif) is located at residues 280–313 (SLKELGEMLEPPVGKSGVNHRLRKIEKIAEELRT).

This sequence belongs to the WhiA family.

Its function is as follows. Involved in cell division and chromosome segregation. The polypeptide is Probable cell division protein WhiA (Clostridium perfringens (strain 13 / Type A)).